The following is a 245-amino-acid chain: MILFPAIDLKNGQCVRLEQGDMDRATVFNLDPAAQAKSFAAQGFEYLHVVDLDGAFAGKPMNAQAVESMLQVVKMPVQLGGGIRDLATIEAWLGKGVSRVIIGTAAVRDPALVKDAAKKFPGRVAVGLDARDGKVAVQGWAESSEVTALEIAQRFEDAGVAAIIFTDIARDGLLKGLNLDATIELAATISTPVIASGGFGSIDDVKALILPRAAKLAGAIVGRALYDGRLDPTEALALMRRAAAA.

The active-site Proton acceptor is the Asp8. Asp129 (proton donor) is an active-site residue.

Belongs to the HisA/HisF family.

It is found in the cytoplasm. It catalyses the reaction 1-(5-phospho-beta-D-ribosyl)-5-[(5-phospho-beta-D-ribosylamino)methylideneamino]imidazole-4-carboxamide = 5-[(5-phospho-1-deoxy-D-ribulos-1-ylimino)methylamino]-1-(5-phospho-beta-D-ribosyl)imidazole-4-carboxamide. It participates in amino-acid biosynthesis; L-histidine biosynthesis; L-histidine from 5-phospho-alpha-D-ribose 1-diphosphate: step 4/9. The chain is 1-(5-phosphoribosyl)-5-[(5-phosphoribosylamino)methylideneamino] imidazole-4-carboxamide isomerase from Rhodopseudomonas palustris (strain BisB18).